The primary structure comprises 187 residues: Peptidyl-tRNA hydrolase (187 aa).

Tyr14 provides a ligand contact to tRNA. His19 functions as the Proton acceptor in the catalytic mechanism. TRNA is bound by residues Tyr64 and Asn66.

It belongs to the PTH family. Monomer.

It localises to the cytoplasm. The enzyme catalyses an N-acyl-L-alpha-aminoacyl-tRNA + H2O = an N-acyl-L-amino acid + a tRNA + H(+). Hydrolyzes ribosome-free peptidyl-tRNAs (with 1 or more amino acids incorporated), which drop off the ribosome during protein synthesis, or as a result of ribosome stalling. Its function is as follows. Catalyzes the release of premature peptidyl moieties from peptidyl-tRNA molecules trapped in stalled 50S ribosomal subunits, and thus maintains levels of free tRNAs and 50S ribosomes. The chain is Peptidyl-tRNA hydrolase from Carboxydothermus hydrogenoformans (strain ATCC BAA-161 / DSM 6008 / Z-2901).